The chain runs to 58 residues: uncharacterized protein (58 aa).

Helical transmembrane passes span 5–25 (IAFE…IIAE) and 32–52 (WIVV…FKMI).

It is found in the cell membrane. This is an uncharacterized protein from Methanocaldococcus jannaschii (strain ATCC 43067 / DSM 2661 / JAL-1 / JCM 10045 / NBRC 100440) (Methanococcus jannaschii).